The primary structure comprises 1458 residues: ABC multidrug transporter B (1458 aa).

Transmembrane regions (helical) follow at residues 30 to 50, 70 to 90, 102 to 122, 128 to 148, and 165 to 185; these read FSLL…VLII, LLWA…VLAV, ASIA…LLSC, STTP…FDIA, and IAIL…LEAV. Residue Asn-208 is glycosylated (N-linked (GlcNAc...) asparagine). Residues 273 to 295 traverse the membrane as a helical segment; it reads WPLLSAVPPRACLAALNFCQPLL. One can recognise an ABC transmembrane type-1 1 domain in the interval 283–561; it reads ACLAALNFCQ…LVMALMTFVG (279 aa). The N-linked (GlcNAc...) asparagine glycan is linked to Asn-309. A run of 5 helical transmembrane segments spans residues 314–334, 387–407, 411–431, 501–521, and 541–561; these read IGYG…VTMG, WQTI…IYLL, LGVA…GCLI, LGWT…YGIM, and LFAL…TFVG. Positions 626 to 853 constitute an ABC transporter 1 domain; the sequence is LTVKNATFAW…AGGYVSSFGL (228 aa). The N-linked (GlcNAc...) asparagine glycan is linked to Asn-630. 660–667 is an ATP binding site; the sequence is GPSGCGKS. N-linked (GlcNAc...) asparagine glycosylation is found at Asn-702, Asn-804, and Asn-879. Positions 933-1182 constitute an ABC transmembrane type-1 2 domain; it reads PNGRTGYYLG…LVTFWTNLET (250 aa). 6 helical membrane-spanning segments follow: residues 940 to 960, 978 to 998, 1016 to 1036, 1040 to 1060, 1125 to 1145, and 1156 to 1176; these read YLGI…IGCW, LLAT…SGSI, AAIN…LMGI, YAAI…KVYL, LTLT…VLVV, and VGVA…LVTF. The 231-residue stretch at 1219-1449 folds into the ABC transporter 2 domain; that stretch reads IEFKSVSAEY…EGSYFSRLYA (231 aa). Residue 1252–1259 participates in ATP binding; the sequence is GRTGSGKT. The N-linked (GlcNAc...) asparagine glycan is linked to Asn-1316.

It belongs to the ABC transporter superfamily. ABCC family. Conjugate transporter (TC 3.A.1.208) subfamily.

It localises to the cell membrane. In terms of biological role, pleiotropic ABC efflux transporter that may be involved in A.fumigatus adaptation to azoles such as vorizonazole. The sequence is that of ABC multidrug transporter B from Aspergillus fumigatus (strain ATCC MYA-4609 / CBS 101355 / FGSC A1100 / Af293) (Neosartorya fumigata).